A 332-amino-acid chain; its full sequence is Holliday junction branch migration complex subunit RuvB (332 aa).

Residues 1-181 (MARILDNDVM…FGITGHMEYY (181 aa)) are large ATPase domain (RuvB-L). ATP contacts are provided by residues leucine 20, arginine 21, glycine 62, lysine 65, threonine 66, threonine 67, 128-130 (EDF), arginine 171, tyrosine 181, and arginine 218. Threonine 66 serves as a coordination point for Mg(2+). The interval 182–252 (QEKDLTEIVE…ITDRALTMLD (71 aa)) is small ATPAse domain (RuvB-S). The interval 255–332 (REGLDYIDQK…RHLGYPYQNT (78 aa)) is head domain (RuvB-H). Arginine 291, arginine 310, arginine 312, and arginine 315 together coordinate DNA.

This sequence belongs to the RuvB family. As to quaternary structure, homohexamer. Forms an RuvA(8)-RuvB(12)-Holliday junction (HJ) complex. HJ DNA is sandwiched between 2 RuvA tetramers; dsDNA enters through RuvA and exits via RuvB. An RuvB hexamer assembles on each DNA strand where it exits the tetramer. Each RuvB hexamer is contacted by two RuvA subunits (via domain III) on 2 adjacent RuvB subunits; this complex drives branch migration. In the full resolvosome a probable DNA-RuvA(4)-RuvB(12)-RuvC(2) complex forms which resolves the HJ.

The protein resides in the cytoplasm. It carries out the reaction ATP + H2O = ADP + phosphate + H(+). Its function is as follows. The RuvA-RuvB-RuvC complex processes Holliday junction (HJ) DNA during genetic recombination and DNA repair, while the RuvA-RuvB complex plays an important role in the rescue of blocked DNA replication forks via replication fork reversal (RFR). RuvA specifically binds to HJ cruciform DNA, conferring on it an open structure. The RuvB hexamer acts as an ATP-dependent pump, pulling dsDNA into and through the RuvAB complex. RuvB forms 2 homohexamers on either side of HJ DNA bound by 1 or 2 RuvA tetramers; 4 subunits per hexamer contact DNA at a time. Coordinated motions by a converter formed by DNA-disengaged RuvB subunits stimulates ATP hydrolysis and nucleotide exchange. Immobilization of the converter enables RuvB to convert the ATP-contained energy into a lever motion, pulling 2 nucleotides of DNA out of the RuvA tetramer per ATP hydrolyzed, thus driving DNA branch migration. The RuvB motors rotate together with the DNA substrate, which together with the progressing nucleotide cycle form the mechanistic basis for DNA recombination by continuous HJ branch migration. Branch migration allows RuvC to scan DNA until it finds its consensus sequence, where it cleaves and resolves cruciform DNA. The sequence is that of Holliday junction branch migration complex subunit RuvB from Streptococcus pyogenes serotype M3 (strain ATCC BAA-595 / MGAS315).